A 335-amino-acid chain; its full sequence is NmrA-like family domain-containing oxidoreductase lnbB (335 aa).

NADP(+) contacts are provided by residues 14-18 (GTGNQ), 41-45 (RHPDS), 62-63 (DG), 83-85 (TNS), K142, and 166-169 (YYEQ).

The protein belongs to the NmrA-type oxidoreductase family.

It functions in the pathway secondary metabolite biosynthesis. Its function is as follows. NmrA-like family domain-containing oxidoreductase; part of the lnb gene cluster that mediates the biosynthesis of diastereomeric piperazines. Lna and lnb clusters encode sets of enzymes that produce overlapping sets of previously undescribed metabolites such as piperazinomycin-like metabolites or morpholine. The lna and lnb biosynthetic pathways appear to be part of a signaling network that controls the formation of sclerotia, a resilient overwintering structure. One primary function of the non-canonical nonribosomal peptide synthetases lnaA and lnbA consists in the reduction of L-tyrosine. The presence in the clusters of tailoring enzymes such as the oxidoreductases lnaB, lnbB, lnaE or lnbE, as well as of the cytochrome P450 monooxygenases lnaC, lnaD, or lnbC, might explain formation of various diastereomeric piperazines. The sequence is that of NmrA-like family domain-containing oxidoreductase lnbB from Aspergillus flavus (strain ATCC 200026 / FGSC A1120 / IAM 13836 / NRRL 3357 / JCM 12722 / SRRC 167).